The chain runs to 267 residues: Mediator of RNA polymerase II transcription subunit 8 (267 aa).

Coiled coils occupy residues 2–27 (QQREEKQLEAFLESLVARVAHLKGSL) and 118–163 (VEEQ…EDRD). The segment covering 156–165 (NNPREDRDSE) has biased composition (basic and acidic residues). Disordered regions lie at residues 156 to 180 (NNPREDRDSETSALRQNKPSFNPAD) and 227 to 267 (ASGH…PYNR). A compositionally biased stretch (polar residues) spans 166 to 180 (TSALRQNKPSFNPAD). Low complexity predominate over residues 236–247 (GPVAPQQPGQPG).

It belongs to the Mediator complex subunit 8 family. Component of the Mediator complex. May be part of a multisubunit E3 ubiquitin-protein ligase complex.

Its subcellular location is the nucleus. It participates in protein modification; protein ubiquitination. Component of the Mediator complex, a coactivator involved in the regulated transcription of nearly all RNA polymerase II-dependent genes. Mediator functions as a bridge to convey information from gene-specific regulatory proteins to the basal RNA polymerase II transcription machinery. Mediator is recruited to promoters by direct interactions with regulatory proteins and serves as a scaffold for the assembly of a functional preinitiation complex with RNA polymerase II and the general transcription factors. May play a role as a target recruitment subunit in E3 ubiquitin-protein ligase complexes and thus in ubiquitination and subsequent proteasomal degradation of target proteins. The polypeptide is Mediator of RNA polymerase II transcription subunit 8 (med8) (Danio rerio (Zebrafish)).